The chain runs to 402 residues: Speedy protein E6 (402 aa).

The interval 1–89 (MDRTETRFRK…EEPEKELAPE (89 aa)) is disordered. Polar residues predominate over residues 16–39 (GKITTSRQPHPQNEQSPQRSTSGY). A compositionally biased stretch (acidic residues) spans 76–89 (DESEEEPEKELAPE).

It belongs to the Speedy/Ringo family.

The protein is Speedy protein E6 (SPDYE6) of Homo sapiens (Human).